Consider the following 120-residue polypeptide: Secreted RxLR effector protein RXLR-C26 (120 aa).

The signal sequence occupies residues 1–29 (MTGILCFPPFARFFMLLSGCAWLAGVSSG). The RxLR-dEER motif lies at 57 to 77 (RNLRGHINSAIIEANDTSEER). An N-linked (GlcNAc...) asparagine glycan is attached at N71.

This sequence belongs to the RxLR effector family.

The protein localises to the secreted. Its subcellular location is the host cytoplasm. The protein resides in the host nucleus. In terms of biological role, secreted effector that does not suppress pattern-triggered immunity (PTI) in plant host. This chain is Secreted RxLR effector protein RXLR-C26, found in Plasmopara halstedii (Downy mildew of sunflower).